The primary structure comprises 226 residues: Holliday junction branch migration complex subunit RuvA (226 aa).

The interval Met1 to Lys67 is domain I. Positions Ser68 to Asp145 are domain II. Residues Lys146–Glu167 form a flexible linker region. The segment at Leu168–Ser226 is domain III.

This sequence belongs to the RuvA family. In terms of assembly, homotetramer. Forms an RuvA(8)-RuvB(12)-Holliday junction (HJ) complex. HJ DNA is sandwiched between 2 RuvA tetramers; dsDNA enters through RuvA and exits via RuvB. An RuvB hexamer assembles on each DNA strand where it exits the tetramer. Each RuvB hexamer is contacted by two RuvA subunits (via domain III) on 2 adjacent RuvB subunits; this complex drives branch migration. In the full resolvosome a probable DNA-RuvA(4)-RuvB(12)-RuvC(2) complex forms which resolves the HJ.

It localises to the cytoplasm. Functionally, the RuvA-RuvB-RuvC complex processes Holliday junction (HJ) DNA during genetic recombination and DNA repair, while the RuvA-RuvB complex plays an important role in the rescue of blocked DNA replication forks via replication fork reversal (RFR). RuvA specifically binds to HJ cruciform DNA, conferring on it an open structure. The RuvB hexamer acts as an ATP-dependent pump, pulling dsDNA into and through the RuvAB complex. HJ branch migration allows RuvC to scan DNA until it finds its consensus sequence, where it cleaves and resolves the cruciform DNA. The chain is Holliday junction branch migration complex subunit RuvA from Mycoplasmoides gallisepticum (strain R(low / passage 15 / clone 2)) (Mycoplasma gallisepticum).